The chain runs to 459 residues: ATP synthase subunit beta (459 aa).

148 to 155 serves as a coordination point for ATP; it reads GGAGVGKT.

The protein belongs to the ATPase alpha/beta chains family. F-type ATPases have 2 components, CF(1) - the catalytic core - and CF(0) - the membrane proton channel. CF(1) has five subunits: alpha(3), beta(3), gamma(1), delta(1), epsilon(1). CF(0) has three main subunits: a(1), b(2) and c(9-12). The alpha and beta chains form an alternating ring which encloses part of the gamma chain. CF(1) is attached to CF(0) by a central stalk formed by the gamma and epsilon chains, while a peripheral stalk is formed by the delta and b chains.

It localises to the cell inner membrane. It carries out the reaction ATP + H2O + 4 H(+)(in) = ADP + phosphate + 5 H(+)(out). Produces ATP from ADP in the presence of a proton gradient across the membrane. The catalytic sites are hosted primarily by the beta subunits. The protein is ATP synthase subunit beta of Burkholderia mallei (strain NCTC 10229).